We begin with the raw amino-acid sequence, 276 residues long: D-aminoacyl-tRNA deacylase (276 aa).

The protein belongs to the DtdA deacylase family. Monomer. The cofactor is Zn(2+).

It catalyses the reaction a D-aminoacyl-tRNA + H2O = a tRNA + a D-alpha-amino acid + H(+). It carries out the reaction glycyl-tRNA(Ala) + H2O = tRNA(Ala) + glycine + H(+). Its function is as follows. D-aminoacyl-tRNA deacylase with broad substrate specificity. By recycling D-aminoacyl-tRNA to D-amino acids and free tRNA molecules, this enzyme counteracts the toxicity associated with the formation of D-aminoacyl-tRNA entities in vivo. The chain is D-aminoacyl-tRNA deacylase from Staphylothermus marinus (strain ATCC 43588 / DSM 3639 / JCM 9404 / F1).